Reading from the N-terminus, the 804-residue chain is MRALWVLGLCCVLLTFGSVRADDEVDVDGTVEEDLGKSREGSRTDDEVVQREEEAIQLDGLNASQIRELREKSEKFAFQAEVNRMMKLIINSLYKNKEIFLRELISNASDALDKIRLISLTDENALSGNEELTVKIKCDKEKNLLHVTDTGVGMTREELVKNLGTIAKSGTSEFLNKMTEAQEDGQSTSELIGQFGVGFCSAFLVADKVIVTSKHNNDTQHIWESDSNEFSVIADPRGNTLGRGTTITLVLKEEASDYLELDTIKNLVKKYSQFINFPIYVWSSKTETVEEPMEEEEAAKEEKEESDDEAAVEEEEEEKKPKTKKVEKTVWDWELMNDIKPIWQRPSKEVEEDEYKAFYKSFSKESDDPMAYIHFTAEGEVTFKSILFVPTSAPRGLFDEYGSKKSDYIKLYVRRVFITDDFHDMMPKYLNFVKGVVDSDDLPLNVSRETLQQHKLLKVIRKKLVRKTLDMIKKIADDKYNDTFWKEFGTNIKLGVIEDHSNRTRLAKLLRFQSSHHPTDITSLDQYVERMKEKQDKIYFMAGSSRKEAESSPFVERLLKKGYEVIYLTEPVDEYCIQALPEFDGKRFQNVAKEGVKFDESEKTKESREAIEKEFEPLLNWMKDKALKDKIEKAVVSQRLTESPCALVASQYGWSGNMERIMKAQAYQTGKDISTNYYASQKKTFEINPRHPLIRDMLRRIKEDEDDKTVLDLAVVLFETATLRSGYLLPDTKAYGDRIERMLRLSLNIDPDAKVEEEPEEEPEETTEDTTEDTEQDEDEEMDVGTDEEEQETAKESTAEKDEL.

The signal sequence occupies residues 1-21 (MRALWVLGLCCVLLTFGSVRA). The SRT pseudosubstrate motif signature appears at 42 to 44 (SRT). Asn-62 carries N-linked (GlcNAc...) asparagine glycosylation. Residue Ser-64 is modified to Phosphoserine. Asn-107 carries an N-linked (GlcNAc...) asparagine glycan. Positions 107, 149, and 162 each coordinate ATP. The residue at position 168 (Lys-168) is an N6-(2-hydroxyisobutyryl)lysine. Ser-172 carries the post-translational modification Phosphoserine. An ATP-binding site is contributed by Phe-199. Asn-217 is a glycosylation site (N-linked (GlcNAc...) asparagine). The tract at residues 288–323 (TVEEPMEEEEAAKEEKEESDDEAAVEEEEEEKKPKT) is disordered. Residues 289 to 317 (VEEPMEEEEAAKEEKEESDDEAAVEEEEE) show a composition bias toward acidic residues. 2 positions are modified to phosphoserine: Ser-306 and Ser-403. Lys-404 is modified (N6-succinyllysine). Residue Asn-445 is glycosylated (N-linked (GlcNAc...) asparagine). Ser-447 carries the phosphoserine modification. The residue at position 479 (Lys-479) is an N6-acetyllysine. Asn-481 and Asn-502 each carry an N-linked (GlcNAc...) asparagine glycan. Position 633 is an N6-succinyllysine (Lys-633). Residues 750-804 (DPDAKVEEEPEEEPEETTEDTTEDTEQDEDEEMDVGTDEEEQETAKESTAEKDEL) are disordered. The segment covering 757–791 (EEPEEEPEETTEDTTEDTEQDEDEEMDVGTDEEEQ) has biased composition (acidic residues). Residue Thr-786 is modified to Phosphothreonine. The segment covering 792-804 (ETAKESTAEKDEL) has biased composition (basic and acidic residues). The Prevents secretion from ER signature appears at 801 to 804 (KDEL).

It belongs to the heat shock protein 90 family. Homodimer; disulfide-linked. Component of an EIF2 complex at least composed of CELF1/CUGBP1, CALR, CALR3, EIF2S1, EIF2S2, HSP90B1 and HSPA5. Part of a large chaperone multiprotein complex comprising DNAJB11, HSP90B1, HSPA5, HYOU, PDIA2, PDIA4, PDIA6, PPIB, SDF2L1, UGGT1 and very small amounts of ERP29, but not, or at very low levels, CALR nor CANX. Interacts with AIMP1; regulates its retention in the endoplasmic reticulum. Hyperglycosylated form interacts with OS9; promoting its degradation by the endoplasmic reticulum associated degradation (ERAD). Interacts with CNPY3. This interaction is disrupted in the presence of ATP. Interacts with TLR4 and TLR9, but not with TLR3. Interacts with MZB1 in a calcium-dependent manner. Interacts with METTL23. Interacts with IL1B; the interaction facilitates cargo translocation into the ERGIC. Interacts with EIF2AK3. Post-translationally, phosphorylated by CK2. In terms of processing, N-glycosylated cotranslationally at Asn-217 by STT3A-containing OST-A complex: this glycosylation is constitutive. In response to various stress, 5 additional facultative sites (Asn-62, Asn-107, Asn-445, Asn-481 and Asn-502) can be glycosylated post-translationally by STT3B-containing OST-B complex, leading to a hyperglycosylated form that is degraded by the ER-associated degradation (ERAD) pathway. In normal conditions, the OST-A complex together with CCDC134 prevent glycosylation at facultative sites during protein folding, thereby preventing hyperglycosylation. Mechanistically, nascent HSP90B1 is tethered during translation to a specialized CCDC134-containing translocon that forms a microenvironment for its folding, in which STT3A associates with the SRT pseudosubstrate motif, and prevents access to facultative glycosylation sites until folding is completed, rendering its facultative sites inaccessible to the OST-B complex.

It localises to the endoplasmic reticulum lumen. The protein localises to the sarcoplasmic reticulum lumen. The protein resides in the melanosome. It catalyses the reaction ATP + H2O = ADP + phosphate + H(+). Its function is as follows. ATP-dependent chaperone involved in the processing of proteins in the endoplasmic reticulum, regulating their transport. Together with MESD, acts as a modulator of the Wnt pathway by promoting the folding of LRP6, a coreceptor of the canonical Wnt pathway. When associated with CNPY3, required for proper folding of Toll-like receptors. Promotes folding and trafficking of TLR4 to the cell surface. May participate in the unfolding of cytosolic leaderless cargos (lacking the secretion signal sequence) such as the interleukin 1/IL-1 to facilitate their translocation into the ERGIC (endoplasmic reticulum-Golgi intermediate compartment) and secretion; the translocation process is mediated by the cargo receptor TMED10. This Pongo abelii (Sumatran orangutan) protein is Endoplasmin (HSP90B1).